The following is a 260-amino-acid chain: MNLYEFTFIAQQGLLQQEVEGMAQELGVSLKNIKADIMFQQIKGILEKGSDKFTKRDSEMHAKDIQENLIAYSSFLESFAKILWIELEEDLSNLKEVKLKISKELKDDLKGLGIAQGFIKLPEGGKQIAKNAFIHNAVSALKEDISKHLIKIFQGILQNFGMAEPNQSNKTLEMLLDNIEASGLIKYEYWGLLDFAYPINKMKSGHYCIMCISSTSNIMDEFVRRIKLNENIIRHLSVHVDKFFEGKSHMMNKQVEEQSA.

It belongs to the bacterial ribosomal protein bS6 family.

Binds together with bS18 to 16S ribosomal RNA. This chain is Small ribosomal subunit protein bS6, found in Wolbachia sp. subsp. Brugia malayi (strain TRS).